The sequence spans 1259 residues: Neural cell adhesion molecule L1 (1259 aa).

A signal peptide spans 1 to 19; sequence MVMMLWYVLPLLLCSPCLL. Residues 20–1122 lie on the Extracellular side of the membrane; the sequence is IQIPDEYKGH…VSTTGSFASE (1103 aa). Ig-like C2-type domains lie at 35-128, 138-225, 239-327, 332-419, 424-506, and 517-600; these read PVIT…HEIQ, PKET…EPID, PRLL…YYVT, PYWL…AYIY, PARI…NNVT, and TQIT…DEVE. 2 cysteine pairs are disulfide-bonded: cysteine 57–cysteine 113 and cysteine 157–cysteine 208. 4 N-linked (GlcNAc...) asparagine glycosylation sites follow: asparagine 100, asparagine 202, asparagine 246, and asparagine 293. Cystine bridges form between cysteine 263-cysteine 311 and cysteine 353-cysteine 403. Asparagine 432, asparagine 489, and asparagine 504 each carry an N-linked (GlcNAc...) asparagine glycan. A disulfide bridge links cysteine 447 with cysteine 496. Cysteines 538 and 590 form a disulfide. 2 consecutive short sequence motifs (cell attachment site) follow at residues 553 to 555 and 562 to 564; these read RGD. 5 consecutive Fibronectin type-III domains span residues 613-711, 716-809, 811-916, 919-1014, and 1016-1116; these read PVPH…TPEA, NPVD…SGED, PQVS…PEGV, HPEA…MALF, and KPDF…VSTT. A glycan (N-linked (GlcNAc...) asparagine) is linked at asparagine 670. Positions 697–724 are disordered; it reads GEPSPVSETVVTPEAAPEKNPVDVRGEG. The segment covering 712–724 has biased composition (basic and acidic residues); the sequence is APEKNPVDVRGEG. N-linked (GlcNAc...) asparagine glycans are attached at residues asparagine 725, asparagine 776, asparagine 824, asparagine 848, asparagine 875, asparagine 968, asparagine 978, asparagine 1021, asparagine 1029, asparagine 1072, and asparagine 1106. The helical transmembrane segment at 1123 to 1145 threads the bilayer; sequence GWFIAFVSAIILLLLILLILCFI. Over 1146-1259 the chain is Cytoplasmic; sequence KRSKGGKYSV…SPINPAVALE (114 aa). Serine 1165, arginine 1179, serine 1180, serine 1183, serine 1196, serine 1245, serine 1246, and serine 1250 each carry phosphoserine. 2 disordered regions span residues 1182–1209 and 1228–1259; these read ESDN…SDDS and IGQY…VALE. Polar residues predominate over residues 1243–1252; that stretch reads NDSSGATSPI.

This sequence belongs to the immunoglobulin superfamily. L1/neurofascin/NgCAM family. As to quaternary structure, interacts with SHTN1; the interaction occurs in axonal growth cones. Interacts with isoform 2 of BSG. As to expression, isoform 2 is predominantly found in the brain, while isoform 1 is found in the peripheral nervous system.

Its subcellular location is the cell membrane. It is found in the cell projection. The protein resides in the growth cone. In terms of biological role, neural cell adhesion molecule involved in the dynamics of cell adhesion and in the generation of transmembrane signals at tyrosine kinase receptors. During brain development, critical in multiple processes, including neuronal migration, axonal growth and fasciculation, and synaptogenesis. In the mature brain, plays a role in the dynamics of neuronal structure and function, including synaptic plasticity. The polypeptide is Neural cell adhesion molecule L1 (L1cam) (Rattus norvegicus (Rat)).